We begin with the raw amino-acid sequence, 263 residues long: Nitrogenase iron protein 2 (263 aa).

9–16 (GKGGIGKS) provides a ligand contact to ATP. Position 92 (Cys92) interacts with [4Fe-4S] cluster. Arg95 carries the post-translational modification ADP-ribosylarginine; by dinitrogenase reductase ADP-ribosyltransferase. Cys127 contributes to the [4Fe-4S] cluster binding site.

It belongs to the NifH/BchL/ChlL family. In terms of assembly, homodimer. It depends on [4Fe-4S] cluster as a cofactor. In terms of processing, the reversible ADP-ribosylation of Arg-95 inactivates the nitrogenase reductase and regulates nitrogenase activity.

The catalysed reaction is N2 + 8 reduced [2Fe-2S]-[ferredoxin] + 16 ATP + 16 H2O = H2 + 8 oxidized [2Fe-2S]-[ferredoxin] + 2 NH4(+) + 16 ADP + 16 phosphate + 6 H(+). Functionally, the key enzymatic reactions in nitrogen fixation are catalyzed by the nitrogenase complex, which has 2 components: the iron protein and the molybdenum-iron protein. In Methanobacterium ivanovii, this protein is Nitrogenase iron protein 2 (nifH2).